Here is an 848-residue protein sequence, read N- to C-terminus: Crooked neck-like protein 1 (848 aa).

Thr2 is subject to N-acetylalanine. The disordered stretch occupies residues 81 to 106; sequence RSSRTPHSTRCRKEDAQPGHHGNGAA. HAT repeat units lie at residues 222 to 254, 256 to 288, 290 to 322, 324 to 355, 357 to 388, 390 to 425, 427 to 461, 471 to 503, 505 to 539, 549 to 585, 587 to 618, 620 to 652, 654 to 688, 690 to 721, 726 to 767, 769 to 807, and 809 to 834; these read DYKLRKRKTFEDNIRKNRTVISNWIKYAQWEES, KEIQRARSIYERALDVDYRNITLWLKYAEMEMK, RQVNHARNIWDRAITTLPRVNQFWYKYTYMEEM, GNVAGARQVFERWMEWQPEEQAWHSYINFELR, KEVDRARTIYERFVLVHPDVKNWIKYARFEEK, AYFAHARKVYERAVEFFGDEHMDEHLYVAFAKFEEN, KEFERVRVIYKYALDRISKQDAQELFKNYTIFEKK, IIVSKRRFQYEEEVKANPHNYDAWFDYLRLVES, AEAEAVREVYERAIANVPPIQEKRHWKRYIYLWIN, KDPERTRQVYQASLELIPHKKFTFAKMWILYAQFEIR, KNLSLARRALGTSIGKCPKNKLFKVYIELELQ, REFDRCRKLYEKFLEFGPENCTSWIKFAELETI, GDIDRARAIYELAISQPRLDMPEVLWKSYIDFEIE, EETERTRNLYRRLLQRTQHVKVWISFAQFELS, GSLT…EFGT, SDKERVDKLMPEKVKKRRKVQTDDGSDAGWEEYFDYIFP, and DAANQPNLKLLAMAKLWKKQQQEKED. Residues 411 to 628 are mediates interaction with HSP90; it reads MDEHLYVAFA…LREFDRCRKL (218 aa). Residue Ser503 is modified to Phosphoserine. The segment at 827–848 is disordered; sequence KQQQEKEDAEHHPDEDVDESES. Residues 828 to 840 show a composition bias toward basic and acidic residues; sequence QQQEKEDAEHHPD.

It belongs to the crooked-neck family. As to quaternary structure, identified in the spliceosome C complex. Present in a spliceosome complex assembled in vitro containing CRNKL1, HPRP8BP and SNRPB2. Component of the minor spliceosome, which splices U12-type introns. Isoform 2 seems to be predominant in the spliceosome complex. Interacts with PPIL2 (via the PPIase cyclophilin-type domain); they may form a trimeric complex with HSP90. In terms of tissue distribution, widely expressed. Highly expressed in testis. Not detected in brain and lung.

Its subcellular location is the nucleus. The protein resides in the nucleus speckle. In terms of biological role, involved in pre-mRNA splicing process. As a component of the minor spliceosome, involved in the splicing of U12-type introns in pre-mRNAs. The protein is Crooked neck-like protein 1 (CRNKL1) of Homo sapiens (Human).